The sequence spans 35 residues: MSDIN-like toxin proprotein 6 (35 aa).

Positions 1-10 (MSDINTTRLP) are excised as a propeptide. A cross-link (cyclopeptide (Phe-Pro)) is located at residues 11–18 (FVFVASPP). The propeptide occupies 19–35 (CVGDDIAMVLTRGENLC).

The protein belongs to the MSDIN fungal toxin family. Post-translationally, processed by the macrocyclase-peptidase enzyme POPB to yield a toxic cyclic octapeptide. POPB first removes 10 residues from the N-terminus. Conformational trapping of the remaining peptide forces the enzyme to release this intermediate rather than proceed to macrocyclization. The enzyme rebinds the remaining peptide in a different conformation and catalyzes macrocyclization of the N-terminal 8 residues. Expressed in basidiocarps.

Its function is as follows. Probable toxin that belongs to the MSDIN-like toxin family responsible for a large number of food poisoning cases and deaths. The polypeptide is MSDIN-like toxin proprotein 6 (Amanita exitialis (Guangzhou destroying angel)).